The following is a 277-amino-acid chain: Undecaprenyl-diphosphatase (277 aa).

Transmembrane regions (helical) follow at residues 3-23 (IALL…EFLP), 44-64 (AKVF…LVYW), 82-102 (QFAL…LLFG), 109-129 (LFTP…ILWA), 188-208 (ATDF…VYSL), 218-238 (ADVP…WLCI), and 249-269 (SFIP…ATAW).

It belongs to the UppP family.

It localises to the cell inner membrane. The enzyme catalyses di-trans,octa-cis-undecaprenyl diphosphate + H2O = di-trans,octa-cis-undecaprenyl phosphate + phosphate + H(+). Functionally, catalyzes the dephosphorylation of undecaprenyl diphosphate (UPP). Confers resistance to bacitracin. This chain is Undecaprenyl-diphosphatase, found in Polaromonas sp. (strain JS666 / ATCC BAA-500).